A 209-amino-acid chain; its full sequence is Uridine kinase (209 aa).

Residue 12–19 (GGSGSGKT) coordinates ATP.

The protein belongs to the uridine kinase family.

Its subcellular location is the cytoplasm. It catalyses the reaction uridine + ATP = UMP + ADP + H(+). The enzyme catalyses cytidine + ATP = CMP + ADP + H(+). The protein operates within pyrimidine metabolism; CTP biosynthesis via salvage pathway; CTP from cytidine: step 1/3. It functions in the pathway pyrimidine metabolism; UMP biosynthesis via salvage pathway; UMP from uridine: step 1/1. The chain is Uridine kinase from Listeria innocua serovar 6a (strain ATCC BAA-680 / CLIP 11262).